We begin with the raw amino-acid sequence, 612 residues long: Baeyer-Villiger monooxygenase 4 (612 aa).

Residues glutamate 99, 107-110, aspartate 119, tyrosine 125, and alanine 169 each bind FAD; that span reads TWYW. 117–119 is a binding site for NADP(+); the sequence is QCD. NADP(+) is bound by residues 253–259, 276–277, and 393–394; these read TGATGVQ, RT, and KR.

This sequence belongs to the FAD-binding monooxygenase family. FAD is required as a cofactor.

Its function is as follows. Catalyzes a Baeyer-Villiger oxidation reaction, i.e. the insertion of an oxygen atom into a carbon-carbon bond adjacent to a carbonyl, which converts ketones to esters or lactones using NADPH as an electron donor. Has a broad substrate scope and oxidizes different compounds including substituted and unsubstituted alicyclic, bicyclic-, aliphatic-ketones, ketones with an aromatic moiety, and sulfides. The highest activities are measured for 2- and 3-methylcyclohexanone, phenylacetone, bicyclo[3.2.0]hept-2-en-6-one and menthone. Cannot use NADH instead of NADPH. Is not active on benzaldehyde. The sequence is that of Baeyer-Villiger monooxygenase 4 from Dietzia sp. (strain D5).